We begin with the raw amino-acid sequence, 125 residues long: Histone H2A (125 aa).

Basic residues predominate over residues 1–18 (MSGRGKGGKVKAKAKSRS). The interval 1-21 (MSGRGKGGKVKAKAKSRSSRA) is disordered. Ser-2 is subject to N-acetylserine. Phosphoserine is present on Ser-2. Lys-119 is covalently cross-linked (Glycyl lysine isopeptide (Lys-Gly) (interchain with G-Cter in ubiquitin)).

The protein belongs to the histone H2A family. As to quaternary structure, the nucleosome is a histone octamer containing two molecules each of H2A, H2B, H3 and H4 assembled in one H3-H4 heterotetramer and two H2A-H2B heterodimers. The octamer wraps approximately 147 bp of DNA. Monoubiquitination of Lys-119 gives a specific tag for epigenetic transcriptional repression. Post-translationally, phosphorylation on Ser-2 is enhanced during mitosis. Phosphorylation on Ser-2 directly represses transcription.

It localises to the nucleus. It is found in the chromosome. Core component of nucleosome. Nucleosomes wrap and compact DNA into chromatin, limiting DNA accessibility to the cellular machineries which require DNA as a template. Histones thereby play a central role in transcription regulation, DNA repair, DNA replication and chromosomal stability. DNA accessibility is regulated via a complex set of post-translational modifications of histones, also called histone code, and nucleosome remodeling. This Chironomus thummi thummi (Midge) protein is Histone H2A.